An 803-amino-acid polypeptide reads, in one-letter code: Volume-regulated anion channel subunit LRRC8B (803 aa).

The Cytoplasmic portion of the chain corresponds to 1 to 25; sequence MITLTELKCLADAQSSYHILKPWWD. The helical transmembrane segment at 26-46 threads the bilayer; the sequence is VFWYYITLIMLLVAVLAGALQ. At 47–119 the chain is on the extracellular side; that stretch reads LTQSRVLCCL…YEKQLHWFAK (73 aa). 2 cysteine pairs are disulfide-bonded: Cys55/Cys304 and Cys109/Cys289. A glycan (N-linked (GlcNAc...) asparagine) is linked at Asn78. The chain crosses the membrane as a helical span at residues 120-140; sequence FFPYLVLLHTLIFAACSNFWL. The Cytoplasmic portion of the chain corresponds to 141–261; the sequence is HYPSTSSRLE…DIIYRVYLKQ (121 aa). A phosphoserine mark is found at Ser186 and Ser196. A helical transmembrane segment spans residues 262–282; it reads IIVKVILFVLIITYVPYFLTH. Residues 283-307 are Extracellular-facing; it reads ITLEIDCSVDVQAFTGYKRYQCVYS. A helical transmembrane segment spans residues 308–328; it reads LAEIFKVLASFYVILVILYGL. Residues 329 to 803 are Cytoplasmic-facing; that stretch reads TSSYSLWWML…ERLQTCLDKC (475 aa). 13 LRR repeats span residues 464-486, 488-509, 511-532, 539-559, 562-582, 586-607, 609-630, 634-655, 657-678, 680-701, 703-724, 726-747, and 749-771; these read NLKE…AFLE, NLKI…VFHL, NLKE…MQLE, NLRT…VTDL, SLQK…NNLK, NLKS…IFSL, NLHE…ISFQ, NLSC…IGAL, NLEQ…LFLC, KLHY…IQYL, NLQY…LFQC, KLQC…VGEL, and NLTH…EGCQ.

Belongs to the LRRC8 family. As to quaternary structure, heterohexamer; oligomerizes with other LRRC8 proteins (LRRC8A, LRRC8C, LRRC8D and/or LRRC8E) to form a heterohexamer. In vivo, the subunit composition may depend primarily on expression levels, and heterooligomeric channels containing various proportions of the different LRRC8 proteins may coexist.

It localises to the cell membrane. The protein resides in the endoplasmic reticulum membrane. It catalyses the reaction chloride(in) = chloride(out). The catalysed reaction is iodide(out) = iodide(in). It carries out the reaction taurine(out) = taurine(in). Non-essential component of the volume-regulated anion channel (VRAC, also named VSOAC channel), an anion channel required to maintain a constant cell volume in response to extracellular or intracellular osmotic changes. The VRAC channel conducts iodide better than chloride and can also conduct organic osmolytes like taurine. Channel activity requires LRRC8A plus at least one other family member (LRRC8B, LRRC8C, LRRC8D or LRRC8E); channel characteristics depend on the precise subunit composition. The sequence is that of Volume-regulated anion channel subunit LRRC8B from Homo sapiens (Human).